The chain runs to 560 residues: Mitochondria-eating protein (560 aa).

The tract at residues 1-294 (MADNLRKLVS…SHSRNHSRSR (294 aa)) is interaction with YWHAG/14-3-3 protein gamma. Phosphoserine occurs at positions 13, 85, 156, and 159. Coiled coils occupy residues 118 to 186 (DRNI…SRHR) and 223 to 248 (DYEK…LQGR). Disordered stretches follow at residues 178–217 (QAQE…AQRK) and 243–316 (SVLQ…AKLS). A compositionally biased stretch (basic and acidic residues) spans 181-209 (EESRHRPPEHRSSEKRGSERRRVEPRGAD). Over residues 248–262 (RSTRSRSPSPASCSR) the composition is skewed to low complexity. The segment covering 263–293 (SRSHSHSRSRSHSHSRSGSHSRSHSRNHSRS) has biased composition (basic residues). Polar residues predominate over residues 300–310 (TAVSGVRSPSP). Residues S307, S309, and S531 each carry the phosphoserine modification.

The protein belongs to the MIEAP family. As to quaternary structure, interacts (via coiled-coil domains) with BNIP3L (via BH3 domain). Interacts (via coiled-coil domains) with BNIP3 (via BH3 domain). Interacts with YWHAG/14-3-3 protein gamma; a protein that also plays a role in MALM.

It is found in the cytoplasm. Its subcellular location is the cytosol. The protein localises to the mitochondrion outer membrane. The protein resides in the mitochondrion matrix. In terms of biological role, key regulator of mitochondrial quality that mediates the repairing or degradation of unhealthy mitochondria in response to mitochondrial damage. Mediator of mitochondrial protein catabolic process (also named MALM) by mediating the degradation of damaged proteins inside mitochondria by promoting the accumulation in the mitochondrial matrix of hydrolases that are characteristic of the lysosomal lumen. Also involved in mitochondrion degradation of damaged mitochondria by promoting the formation of vacuole-like structures (named MIV), which engulf and degrade unhealthy mitochondria by accumulating lysosomes. The physical interaction of SPATA18/MIEAP, BNIP3 and BNIP3L/NIX at the mitochondrial outer membrane regulates the opening of a pore in the mitochondrial double membrane in order to mediate the translocation of lysosomal proteins from the cytoplasm to the mitochondrial matrix. Binds cardiolipin. May form molecular condensates (non-membrane-bounded organelles) within mitochondria that compartmentalize and promote cardiolipin metabolism. The polypeptide is Mitochondria-eating protein (SPATA18) (Sus scrofa (Pig)).